The chain runs to 186 residues: Ribosome-recycling factor (186 aa).

The protein belongs to the RRF family.

It localises to the cytoplasm. In terms of biological role, responsible for the release of ribosomes from messenger RNA at the termination of protein biosynthesis. May increase the efficiency of translation by recycling ribosomes from one round of translation to another. This is Ribosome-recycling factor from Rickettsia typhi (strain ATCC VR-144 / Wilmington).